We begin with the raw amino-acid sequence, 74 residues long: Sec-independent protein translocase protein TatA (74 aa).

The helical transmembrane segment at 1 to 21 (MGGISIWNLVIIVLLVVLLFG) threads the bilayer. The segment at 51 to 74 (AEFEKVEQKTAESTEQKAKEKEQA) is disordered.

It belongs to the TatA/E family. The Tat system comprises two distinct complexes: a TatABC complex, containing multiple copies of TatA, TatB and TatC subunits, and a separate TatA complex, containing only TatA subunits. Substrates initially bind to the TatABC complex, which probably triggers association of the separate TatA complex to form the active translocon.

It localises to the cell inner membrane. In terms of biological role, part of the twin-arginine translocation (Tat) system that transports large folded proteins containing a characteristic twin-arginine motif in their signal peptide across membranes. TatA could form the protein-conducting channel of the Tat system. The chain is Sec-independent protein translocase protein TatA from Glaesserella parasuis serovar 5 (strain SH0165) (Haemophilus parasuis).